The sequence spans 588 residues: Adenine deaminase (588 aa).

The protein belongs to the metallo-dependent hydrolases superfamily. Adenine deaminase family. Homodimer. The cofactor is Mn(2+).

It catalyses the reaction adenine + H2O + H(+) = hypoxanthine + NH4(+). This chain is Adenine deaminase, found in Escherichia coli O7:K1 (strain IAI39 / ExPEC).